The following is a 314-amino-acid chain: MKLKNTLLASALLSAMAFSVNAATELTPEQAAAVKPFDRVVVTGRFNAIGEAVKAVSRRADKEGAASFYVVDTSDFGNSGNWRVVADLYKADAEKAEETSNRVINGVVELPKDQAVLIEPFDTVTVQGFYRSQPEVNDAITKAAKAKGAYSFYIVRQIDANQGGNQRITAFIYKKDAKKRIVQSPDVIPADSEAGRAALAAGGEAAKKVEIPGVATTASPSSEVGRFFETQSSKGGRYTVTLPDGTKVEELNKATAAMMVPFDSIKFSGNYGNMTEVSYQVAKRAAKKGAKYYHITRQWQERGNNLTVSADLYK.

The signal sequence occupies residues 1-19 (MKLKNTLLASALLSAMAFS).

It to E.coli YjfY.

The chain is Protein YdgH (ydgH) from Escherichia coli (strain K12).